Reading from the N-terminus, the 228-residue chain is Octanoyltransferase (228 aa).

One can recognise a BPL/LPL catalytic domain in the interval 40–225 (GEEAERVWLV…SFERVFDAAP (186 aa)). Substrate is bound by residues 79–86 (RGGQWTYH), 156–158 (AIG), and 169–171 (GIA). C187 functions as the Acyl-thioester intermediate in the catalytic mechanism.

It belongs to the LipB family.

Its subcellular location is the cytoplasm. It carries out the reaction octanoyl-[ACP] + L-lysyl-[protein] = N(6)-octanoyl-L-lysyl-[protein] + holo-[ACP] + H(+). It functions in the pathway protein modification; protein lipoylation via endogenous pathway; protein N(6)-(lipoyl)lysine from octanoyl-[acyl-carrier-protein]: step 1/2. In terms of biological role, catalyzes the transfer of endogenously produced octanoic acid from octanoyl-acyl-carrier-protein onto the lipoyl domains of lipoate-dependent enzymes. Lipoyl-ACP can also act as a substrate although octanoyl-ACP is likely to be the physiological substrate. The sequence is that of Octanoyltransferase from Acidiphilium cryptum (strain JF-5).